A 228-amino-acid polypeptide reads, in one-letter code: DOPA 4,5-dioxygenase (228 aa).

Homodimer. In terms of tissue distribution, expressed at high level in coloured cap tissue and at least 10 times lower level in the stipe.

It is found in the cytoplasm. It functions in the pathway pigment biosynthesis; betalain biosynthesis. Its function is as follows. Extradiol dioxygenase that opens up the cyclic ring of DOPA between carbons 4 and 5 thus producing an unstable seco-DOPA that rearranges non-enzymatically to betalamic acid. Can also catalyze the formation of muscaflavin (a pigment found in the hygrocybe mushrooms family and of some amanita species only) by a 2,3-extradiol cleavage of DOPA. The polypeptide is DOPA 4,5-dioxygenase (DODA) (Amanita muscaria (Fly agaric)).